The primary structure comprises 117 residues: Ribonuclease P protein component (117 aa).

The protein belongs to the RnpA family. Consists of a catalytic RNA component (M1 or rnpB) and a protein subunit.

It carries out the reaction Endonucleolytic cleavage of RNA, removing 5'-extranucleotides from tRNA precursor.. RNaseP catalyzes the removal of the 5'-leader sequence from pre-tRNA to produce the mature 5'-terminus. It can also cleave other RNA substrates such as 4.5S RNA. The protein component plays an auxiliary but essential role in vivo by binding to the 5'-leader sequence and broadening the substrate specificity of the ribozyme. This is Ribonuclease P protein component from Thermotoga petrophila (strain ATCC BAA-488 / DSM 13995 / JCM 10881 / RKU-1).